A 412-amino-acid chain; its full sequence is Multifunctional CCA protein (412 aa).

ATP contacts are provided by Gly-8 and Arg-11. Residues Gly-8 and Arg-11 each coordinate CTP. Residues Glu-21 and Asp-23 each coordinate Mg(2+). ATP is bound by residues Arg-91, Arg-137, and Arg-140. CTP is bound by residues Arg-91, Arg-137, and Arg-140. The region spanning Cys-228–Leu-329 is the HD domain.

This sequence belongs to the tRNA nucleotidyltransferase/poly(A) polymerase family. Bacterial CCA-adding enzyme type 1 subfamily. Monomer. Can also form homodimers and oligomers. Mg(2+) is required as a cofactor. It depends on Ni(2+) as a cofactor.

The enzyme catalyses a tRNA precursor + 2 CTP + ATP = a tRNA with a 3' CCA end + 3 diphosphate. It catalyses the reaction a tRNA with a 3' CCA end + 2 CTP + ATP = a tRNA with a 3' CCACCA end + 3 diphosphate. Catalyzes the addition and repair of the essential 3'-terminal CCA sequence in tRNAs without using a nucleic acid template. Adds these three nucleotides in the order of C, C, and A to the tRNA nucleotide-73, using CTP and ATP as substrates and producing inorganic pyrophosphate. tRNA 3'-terminal CCA addition is required both for tRNA processing and repair. Also involved in tRNA surveillance by mediating tandem CCA addition to generate a CCACCA at the 3' terminus of unstable tRNAs. While stable tRNAs receive only 3'-terminal CCA, unstable tRNAs are marked with CCACCA and rapidly degraded. In Acinetobacter baumannii (strain AB307-0294), this protein is Multifunctional CCA protein.